A 196-amino-acid polypeptide reads, in one-letter code: Small ribosomal subunit protein uS4c (196 aa).

The disordered stretch occupies residues 15–42 (LGALPGLTRKTPKSGSNQKKKFNSGKKE). Residues 89–150 (MRLDNILFRL…NQRSKRLVQN (62 aa)) enclose the S4 RNA-binding domain.

This sequence belongs to the universal ribosomal protein uS4 family. As to quaternary structure, part of the 30S ribosomal subunit. Contacts protein S5. The interaction surface between S4 and S5 is involved in control of translational fidelity.

The protein localises to the plastid. It is found in the chloroplast. Functionally, one of the primary rRNA binding proteins, it binds directly to 16S rRNA where it nucleates assembly of the body of the 30S subunit. Its function is as follows. With S5 and S12 plays an important role in translational accuracy. This chain is Small ribosomal subunit protein uS4c (rps4), found in Cenchrus longisetus (Feathertop).